Here is a 1437-residue protein sequence, read N- to C-terminus: FYVE and coiled-coil domain-containing protein 1 (1437 aa).

N-acetylalanine is present on Ala2. A coiled-coil region spans residues 4–30 (SSTETQLQRIIRDLQDAATELSHEFKE). Residues 36-169 (TDDSTSLHKF…VQFDLAPRGY (134 aa)) form the RUN domain. The residue at position 196 (Ser196) is a Phosphoserine. 3 coiled-coil regions span residues 223–270 (SLNN…VSRQ), 305–846 (SQAT…SEGA), and 873–1110 (ALTA…KDAL). Thr372 bears the Phosphothreonine mark. Phosphoserine is present on Ser837. Residues 1132–1190 (DMEVNHCHDCKREFSWIVRRHHCRICGRIFCYYCCNNYVVTKPSGKKERCCRACFQKFG) form an FYVE-type zinc finger. The Zn(2+) site is built by Cys1138, Cys1141, Cys1154, Cys1157, Cys1162, Cys1165, Cys1182, and Cys1185. Disordered stretches follow at residues 1191–1227 (EGSGSNDSSGSGTSQGEPSPMVSPAEASPQSIGSQGI) and 1253–1289 (SGSSLPETPTETDSMDPNTAEQDTTSNSLTPEDTEDV). Residues 1194 to 1206 (GSNDSSGSGTSQG) are compositionally biased toward low complexity. Composition is skewed to polar residues over residues 1218–1227 (SPQSIGSQGI) and 1253–1283 (SGSSLPETPTETDSMDPNTAEQDTTSNSLTP). The GOLD domain occupies 1296–1425 (EICLLKSGEL…SKKVLYHLTV (130 aa)).

In terms of assembly, can form homodimers. Interacts (via C-terminus) with MAP1LC3B. Interacts with RAB7A; the interaction with RAB7A induces FYCO1 recruitment to late endosomal/lysosomal compartments. As to expression, expressed in heart and testis. Expressed in the eye lens.

It is found in the cytoplasmic vesicle. It localises to the autophagosome. Its subcellular location is the endosome. The protein resides in the lysosome. In terms of biological role, may mediate microtubule plus end-directed vesicle transport. In Mus musculus (Mouse), this protein is FYVE and coiled-coil domain-containing protein 1 (Fyco1).